Here is a 521-residue protein sequence, read N- to C-terminus: Protein nucleotidyltransferase YdiU (521 aa).

8 residues coordinate ATP: Gly109, Gly111, Arg112, Lys131, Asp143, Gly144, Arg194, and Arg201. Catalysis depends on Asp270, which acts as the Proton acceptor. Mg(2+) contacts are provided by Asn271 and Asp280. Asp280 is an ATP binding site.

It belongs to the SELO family. Requires Mg(2+) as cofactor. It depends on Mn(2+) as a cofactor.

It carries out the reaction L-seryl-[protein] + ATP = 3-O-(5'-adenylyl)-L-seryl-[protein] + diphosphate. It catalyses the reaction L-threonyl-[protein] + ATP = 3-O-(5'-adenylyl)-L-threonyl-[protein] + diphosphate. The catalysed reaction is L-tyrosyl-[protein] + ATP = O-(5'-adenylyl)-L-tyrosyl-[protein] + diphosphate. The enzyme catalyses L-histidyl-[protein] + UTP = N(tele)-(5'-uridylyl)-L-histidyl-[protein] + diphosphate. It carries out the reaction L-seryl-[protein] + UTP = O-(5'-uridylyl)-L-seryl-[protein] + diphosphate. It catalyses the reaction L-tyrosyl-[protein] + UTP = O-(5'-uridylyl)-L-tyrosyl-[protein] + diphosphate. In terms of biological role, nucleotidyltransferase involved in the post-translational modification of proteins. It can catalyze the addition of adenosine monophosphate (AMP) or uridine monophosphate (UMP) to a protein, resulting in modifications known as AMPylation and UMPylation. This chain is Protein nucleotidyltransferase YdiU, found in Burkholderia pseudomallei (strain 1106a).